A 309-amino-acid polypeptide reads, in one-letter code: ATP synthase gamma chain (309 aa).

This sequence belongs to the ATPase gamma chain family. As to quaternary structure, F-type ATPases have 2 components, CF(1) - the catalytic core - and CF(0) - the membrane proton channel. CF(1) has five subunits: alpha(3), beta(3), gamma(1), delta(1), epsilon(1). CF(0) has three main subunits: a, b and c.

The protein localises to the cell membrane. Functionally, produces ATP from ADP in the presence of a proton gradient across the membrane. The gamma chain is believed to be important in regulating ATPase activity and the flow of protons through the CF(0) complex. The protein is ATP synthase gamma chain of Salinispora arenicola (strain CNS-205).